Reading from the N-terminus, the 61-residue chain is Photosystem II reaction center protein K (61 aa).

A propeptide spanning residues 1–24 is cleaved from the precursor; the sequence is MLNTFSLIGICLNSTLYSSSFFFG. A helical membrane pass occupies residues 36-56; it reads IVDIMPVIPLFFFLLAFVWQA.

This sequence belongs to the PsbK family. PSII is composed of 1 copy each of membrane proteins PsbA, PsbB, PsbC, PsbD, PsbE, PsbF, PsbH, PsbI, PsbJ, PsbK, PsbL, PsbM, PsbT, PsbX, PsbY, PsbZ, Psb30/Ycf12, at least 3 peripheral proteins of the oxygen-evolving complex and a large number of cofactors. It forms dimeric complexes.

The protein localises to the plastid. It is found in the chloroplast thylakoid membrane. In terms of biological role, one of the components of the core complex of photosystem II (PSII). PSII is a light-driven water:plastoquinone oxidoreductase that uses light energy to abstract electrons from H(2)O, generating O(2) and a proton gradient subsequently used for ATP formation. It consists of a core antenna complex that captures photons, and an electron transfer chain that converts photonic excitation into a charge separation. This Solanum bulbocastanum (Wild potato) protein is Photosystem II reaction center protein K.